A 309-amino-acid chain; its full sequence is Tagatose-6-phosphate kinase (309 aa).

Belongs to the carbohydrate kinase PfkB family. LacC subfamily.

It carries out the reaction D-tagatofuranose 6-phosphate + ATP = D-tagatofuranose 1,6-bisphosphate + ADP + H(+). The protein operates within carbohydrate metabolism; D-tagatose 6-phosphate degradation; D-glyceraldehyde 3-phosphate and glycerone phosphate from D-tagatose 6-phosphate: step 1/2. The sequence is that of Tagatose-6-phosphate kinase from Streptococcus pyogenes serotype M18 (strain MGAS8232).